Here is a 481-residue protein sequence, read N- to C-terminus: Glutamyl-tRNA(Gln) amidotransferase subunit A (481 aa).

Catalysis depends on charge relay system residues K76 and S151. S175 acts as the Acyl-ester intermediate in catalysis.

It belongs to the amidase family. GatA subfamily. As to quaternary structure, heterotrimer of A, B and C subunits.

The catalysed reaction is L-glutamyl-tRNA(Gln) + L-glutamine + ATP + H2O = L-glutaminyl-tRNA(Gln) + L-glutamate + ADP + phosphate + H(+). Functionally, allows the formation of correctly charged Gln-tRNA(Gln) through the transamidation of misacylated Glu-tRNA(Gln) in organisms which lack glutaminyl-tRNA synthetase. The reaction takes place in the presence of glutamine and ATP through an activated gamma-phospho-Glu-tRNA(Gln). The polypeptide is Glutamyl-tRNA(Gln) amidotransferase subunit A (Neisseria gonorrhoeae (strain ATCC 700825 / FA 1090)).